The sequence spans 131 residues: Small ribosomal subunit protein uS8 (131 aa).

Belongs to the universal ribosomal protein uS8 family. In terms of assembly, part of the 30S ribosomal subunit. Contacts proteins S5 and S12.

Functionally, one of the primary rRNA binding proteins, it binds directly to 16S rRNA central domain where it helps coordinate assembly of the platform of the 30S subunit. This is Small ribosomal subunit protein uS8 from Zymomonas mobilis subsp. mobilis (strain ATCC 31821 / ZM4 / CP4).